An 842-amino-acid polypeptide reads, in one-letter code: Glucans biosynthesis glucosyltransferase H (842 aa).

7 consecutive transmembrane segments (helical) span residues 140 to 160, 194 to 214, 513 to 533, 568 to 588, 615 to 635, 656 to 676, and 680 to 700; these read ILLLLTLSQTVVATWYMKTIL, ILILFAVLFCWVSAGFWTALM, VFLTGVMSYLSAPLWFMFLAL, IALFASTMVLLFLPKLLSIIL, VLLAPVRMLFHTVFVVSAFLG, FMRHGSQLLLGLVWAVGMAWL, and FLFWLAPIVVSLILSPFVSAI.

It belongs to the glycosyltransferase 2 family. OpgH subfamily.

Its subcellular location is the cell inner membrane. It participates in glycan metabolism; osmoregulated periplasmic glucan (OPG) biosynthesis. In terms of biological role, involved in the biosynthesis of osmoregulated periplasmic glucans (OPGs). The polypeptide is Glucans biosynthesis glucosyltransferase H (Klebsiella pneumoniae subsp. pneumoniae (strain ATCC 700721 / MGH 78578)).